Reading from the N-terminus, the 205-residue chain is Mitotic spindle assembly checkpoint protein MAD2A (205 aa).

N-acetylalanine is present on Ala2. Phosphoserine occurs at positions 6, 130, 170, 178, 185, and 195. Positions 14–197 constitute an HORMA domain; that stretch reads RGSAEIVAEF…TTIHKVNSMV (184 aa). A required for assuming the closed conformation and for interaction with CDC20 region spans residues 195-205; the sequence is SMVAYKIPVND.

Belongs to the MAD2 family. As to quaternary structure, monomer and homodimer. Heterodimerizes with MAD2L1 in order to form a tetrameric MAD1L1-MAD2L1 core complex. In the closed and open conformation, interacts with MAD1L1. Formation of a heterotetrameric core complex containing two molecules each of MAD1L1 and of MAD2L1 promotes binding of another molecule of MAD2L1 to each MAD2L1, resulting in a heterohexamer. Interacts with MAD2L1BP. Interacts with ADAM17/TACE. Interacts with CDC20. Dimeric MAD2L1 in the closed conformation interacts with CDC20. Monomeric MAD2L1 in the open conformation does not interact with CDC20. CDC20 competes with MAD1L1 for MAD2L1 binding. In the closed conformation, interacts with BUB1B. Interacts with TTK. Interacts with TPR. Binds to UBD (via ubiquitin-like 1 domain) during mitosis. Interacts with isoform 1 and isoform 2 of NEK2. Interacts with HSF1; this interaction occurs in mitosis. Interacts with isoform 3 of MAD1L1; this interaction leads to the cytoplasmic sequestration of MAD2L1. In terms of processing, phosphorylated on multiple serine residues. The level of phosphorylation varies during the cell cycle and is highest during mitosis. Phosphorylation abolishes interaction with MAD1L1 and reduces interaction with CDC20. Phosphorylated by NEK2.

The protein resides in the nucleus. It localises to the chromosome. The protein localises to the centromere. It is found in the kinetochore. Its subcellular location is the cytoplasm. The protein resides in the cytoskeleton. It localises to the spindle pole. Component of the spindle-assembly checkpoint that prevents the onset of anaphase until all chromosomes are properly aligned at the metaphase plate. In the closed conformation (C-MAD2) forms a heterotetrameric complex with MAD1L1 at unattached kinetochores during prometaphase, the complex recruits open conformation molecules of MAD2L1 (O-MAD2) and then promotes the conversion of O-MAD2 to C-MAD2. Required for the execution of the mitotic checkpoint which monitors the process of kinetochore-spindle attachment and inhibits the activity of the anaphase promoting complex by sequestering CDC20 until all chromosomes are aligned at the metaphase plate. This Homo sapiens (Human) protein is Mitotic spindle assembly checkpoint protein MAD2A (MAD2L1).